Here is a 417-residue protein sequence, read N- to C-terminus: Gamma-glutamyl phosphate reductase (417 aa).

It belongs to the gamma-glutamyl phosphate reductase family.

It is found in the cytoplasm. The enzyme catalyses L-glutamate 5-semialdehyde + phosphate + NADP(+) = L-glutamyl 5-phosphate + NADPH + H(+). It participates in amino-acid biosynthesis; L-proline biosynthesis; L-glutamate 5-semialdehyde from L-glutamate: step 2/2. Functionally, catalyzes the NADPH-dependent reduction of L-glutamate 5-phosphate into L-glutamate 5-semialdehyde and phosphate. The product spontaneously undergoes cyclization to form 1-pyrroline-5-carboxylate. This Cronobacter sakazakii (strain ATCC BAA-894) (Enterobacter sakazakii) protein is Gamma-glutamyl phosphate reductase.